We begin with the raw amino-acid sequence, 269 residues long: CUE domain-containing protein 2-B (269 aa).

Positions 110–130 are disordered; it reads ASPSEKTATEPLEGAVAQDKD. Positions 131–174 constitute a CUE domain; sequence DPKTGVDLLLEIFPSCTITQAQTALSMAKGDLEDAVQIIVDGKV.

It belongs to the CUEDC2 family. Phosphorylated.

It localises to the cytoplasm. Its subcellular location is the nucleus. In terms of biological role, may play a role in targeting proteins for ubiquitination and subsequent proteasomal degradation. The polypeptide is CUE domain-containing protein 2-B (cuedc2-b) (Xenopus laevis (African clawed frog)).